The sequence spans 417 residues: Tyrosine--tRNA ligase (417 aa).

Residue Tyr-39 coordinates L-tyrosine. A 'HIGH' region motif is present at residues 44-53 (PTASSLHVGH). 2 residues coordinate L-tyrosine: Tyr-176 and Gln-180. The short motif at 236-240 (KMGKS) is the 'KMSKS' region element. Position 239 (Lys-239) interacts with ATP. Residues 350 to 416 (VGVLSLIVRA…GKKKHVLVRP (67 aa)) enclose the S4 RNA-binding domain.

This sequence belongs to the class-I aminoacyl-tRNA synthetase family. TyrS type 1 subfamily. Homodimer.

It is found in the cytoplasm. It catalyses the reaction tRNA(Tyr) + L-tyrosine + ATP = L-tyrosyl-tRNA(Tyr) + AMP + diphosphate + H(+). Catalyzes the attachment of tyrosine to tRNA(Tyr) in a two-step reaction: tyrosine is first activated by ATP to form Tyr-AMP and then transferred to the acceptor end of tRNA(Tyr). The chain is Tyrosine--tRNA ligase from Agrobacterium fabrum (strain C58 / ATCC 33970) (Agrobacterium tumefaciens (strain C58)).